Reading from the N-terminus, the 86-residue chain is MGRKDSSNTKLPVDQYRKQIGKQDYKKTKPILRATKLKAEAKKTAIGIKEVGLMLAAILALLLAFYAFFYLRLSTNIDSDLDLDED.

Residues 51–71 (VGLMLAAILALLLAFYAFFYL) form a helical membrane-spanning segment.

The protein belongs to the TRIQK family. Expressed in heart, brain, spleen, lung, liver, skeletal muscle, kidney and testis.

Its subcellular location is the endoplasmic reticulum membrane. In terms of biological role, may play a role in cell growth and maintenance of cell morphology. The chain is Triple QxxK/R motif-containing protein (Triqk) from Mus musculus (Mouse).